Reading from the N-terminus, the 545-residue chain is uncharacterized protein (545 aa).

Disordered stretches follow at residues 1 to 162 and 200 to 250; these read MSSG…DPQE and YPPV…EPPP. Polar residues predominate over residues 86–100; sequence NYRSHSSADYLTPNS. Composition is skewed to low complexity over residues 109–128 and 141–152; these read TTPR…TATK and SGASTSSGTSST. Composition is skewed to polar residues over residues 212–221 and 228–244; these read SSRTGTLQRT and ISST…QMQS. A PDZ domain is found at 458–540; sequence RVLVEKMMPG…VTITLLPAVG (83 aa).

This is an uncharacterized protein from Caenorhabditis elegans.